The primary structure comprises 920 residues: Whirlin (920 aa).

In terms of domain architecture, PDZ 1 spans 141-224 (LVSLRRAKAH…LVLSVYSAGR (84 aa)). Residues 241–262 (QGRSTSPPSSLPHGSTLRQHED) are disordered. A compositionally biased stretch (polar residues) spans 242–257 (GRSTSPPSSLPHGSTL). The 83-residue stretch at 278–360 (KVNLVLGDGR…LILTVKDVGR (83 aa)) folds into the PDZ 2 domain. Disordered regions lie at residues 502-536 (MKARQPPGPGVGDTYSMVSYSDTGSSTGSHGTSTT), 561-603 (CETT…QGHD), 630-730 (FSAP…AMGA), and 752-828 (RALP…PTST). The segment covering 520 to 536 (SYSDTGSSTGSHGTSTT) has biased composition (low complexity). A compositionally biased stretch (polar residues) spans 561-570 (CETTQGSTNA). Pro residues-rich tracts occupy residues 589-598 (IKPPPPPPPL) and 636-651 (RSPPPPPGIAPTPTPG). Residues 655–674 (ARDSPSSPIYASISHANPSS) show a composition bias toward polar residues. Residue Ser-698 is modified to Phosphoserine. Composition is skewed to polar residues over residues 756-775 (QTRTASTLSQLSDSGQTLSE) and 785-800 (EASTSGRGRQTANTKN). Positions 802-813 (NGKELPQTERTT) are enriched in basic and acidic residues. One can recognise a PDZ 3 domain in the interval 829-912 (LIRVRKSAAT…TKERDYIDFL (84 aa)).

Forms homooligomers. Interacts (via C-terminal PDZ domain) with MYO15A; this interaction is necessary for localization of WHRN to stereocilia tips. Interacts (via C-terminal PDZ domain) with MPP1/p55. Interacts with LRRC4C/NGL1. Interacts with MYO7A. Interacts with RPGR. Interacts with EPS8. Interacts with CASK. Interacts with CIB2. Component of USH2 complex, composed of ADGRV1, PDZD7, USH2A and WHRN. Interacts (via PDZ domains) with PDZD7; the interaction is direct. Interacts (via N-terminal PDZ domain) with USH2A (via cytoplasmic region). Interacts with ADGRV1/MASS1 (via cytoplasmic region). In terms of tissue distribution, ubiquitous. Highly expressed in heart, spleen, lung and liver. Highly expressed in brain, in the olfactory bulb, thalamus, layers III-V of the cerebral cortex and the molecular layer of cerebellum. Detected in soma and dendrites of thalamic neurons, and in cerebrum in cell bodies and apical dendrites of pyramidal neurons. Expressed in retina and inner ear.

It localises to the cytoplasm. Its subcellular location is the cell projection. It is found in the stereocilium. The protein resides in the growth cone. The protein localises to the synapse. Functionally, involved in hearing and vision as member of the USH2 complex. Necessary for elongation and maintenance of inner and outer hair cell stereocilia in the organ of Corti in the inner ear. Involved in the maintenance of the hair bundle ankle region, which connects stereocilia in cochlear hair cells of the inner ear. In retina photoreceptors, required for the maintenance of periciliary membrane complex that seems to play a role in regulating intracellular protein transport. This Rattus norvegicus (Rat) protein is Whirlin.